A 316-amino-acid chain; its full sequence is Epoxide hydrolase 3 (316 aa).

The AB hydrolase-1 domain maps to 25-302 (PVVLLLHGFP…ACHFINQERP (278 aa)). Catalysis depends on aspartate 101, which acts as the Nucleophile. Tyrosine 150 contributes to the an epoxide binding site. Tyrosine 230 serves as the catalytic Proton donor. Histidine 295 functions as the Proton acceptor in the catalytic mechanism.

Belongs to the AB hydrolase superfamily. Epoxide hydrolase family. Homodimer. As to expression, highly expressed in young fruits 15 days after anthesis (15-DAA).

It carries out the reaction an epoxide + H2O = an ethanediol. It catalyses the reaction (24S)-24,25-epoxycucurbitadienol + H2O = (24R)-24,25-dihydroxycucurbitadienol. The protein operates within secondary metabolite biosynthesis; terpenoid biosynthesis. Its function is as follows. Epoxide hydrolase involved in the biosynthesis of cucurbitacin and mogroside tetracyclic triterpene natural products (e.g. siamenoside I and mogrosides IV, V and VI). Cucurbitacins have cytotoxic properties and exhibit deterrent taste as a defense barrier against herbivores. Mogrosides are nonsugar highly oxygenated compounds used as high-intensity zero-calorie sweeteners; they also possess pharmacological properties such as regulating immunity, lowering blood sugar and lipid levels, protecting the liver, and acting as antioxidants and antitumor agents. Catalyzes the hydrolysis of aromatic epoxide-containing substrates, such as the conversion of 24,25-epoxycucurbitadienol to 24,25-dihydroxycucurbitadienol. In Siraitia grosvenorii (Monk's fruit), this protein is Epoxide hydrolase 3.